A 565-amino-acid polypeptide reads, in one-letter code: MSEQKLAVNEYLKTDSDYLRGTIQEGLDTAVTGAFSEGDQQLIKFHGFYQQDDRDLRNERKEQKLEPLYSFMLRARVAGGVCSPEQWLAVDKIASNLTSSNSIRLTTRQTFQYHGIPKRNLKTIIQDLDREALDSIAACGDVNRNVMCNPNPVESKLHQQAYAYAKQLSDNMLPHTKAYAEIWLDDEKLVTTEGEEVEPVYGKTYLPRKFKMAVAVPPDNDVDVYTNDLGFVAVAEGDELVGFNMVAGGGMGSTHGEVSTFPRLADDFGYIKAEDTLKFAEAVMTIQRDWGNRENRKLSRLKYTIVKHGFESFKAEIEARTGIKFEPKRDVVIGDRGDRYGWKQGVDDNWHLTLFIEGGRVKDFPGQPLQTGLREIAKVHQGDFRMTSNQNIIIAGVPSADKALIEGLARQHGLLGKLITETRGHSIACVALPTCALAMAEAERYFPDFLTKVEALQEKHGFLDQGIVIRMTGCPNGCARPFAAEIGLVGKAPGRYNLYLGASFEGTRLNKLYRENIQEAEILAELDALFALYVAERQAGETFGNYTVRSGVVAAVLDAAKDFHG.

Residues Cys429, Cys435, Cys474, and Cys478 each coordinate [4Fe-4S] cluster. A siroheme-binding site is contributed by Cys478.

Belongs to the nitrite and sulfite reductase 4Fe-4S domain family. Alpha(8)-beta(8). The alpha component is a flavoprotein, the beta component is a hemoprotein. Siroheme is required as a cofactor. The cofactor is [4Fe-4S] cluster.

It carries out the reaction hydrogen sulfide + 3 NADP(+) + 3 H2O = sulfite + 3 NADPH + 4 H(+). The protein operates within sulfur metabolism; hydrogen sulfide biosynthesis; hydrogen sulfide from sulfite (NADPH route): step 1/1. Its function is as follows. Component of the sulfite reductase complex that catalyzes the 6-electron reduction of sulfite to sulfide. This is one of several activities required for the biosynthesis of L-cysteine from sulfate. In Shewanella pealeana (strain ATCC 700345 / ANG-SQ1), this protein is Sulfite reductase [NADPH] hemoprotein beta-component.